Consider the following 311-residue polypeptide: Urease accessory protein UreD 3 (311 aa).

It belongs to the UreD family. As to quaternary structure, ureD, UreF and UreG form a complex that acts as a GTP-hydrolysis-dependent molecular chaperone, activating the urease apoprotein by helping to assemble the nickel containing metallocenter of UreC. The UreE protein probably delivers the nickel.

The protein resides in the cytoplasm. Its function is as follows. Required for maturation of urease via the functional incorporation of the urease nickel metallocenter. In Methylorubrum populi (strain ATCC BAA-705 / NCIMB 13946 / BJ001) (Methylobacterium populi), this protein is Urease accessory protein UreD 3.